Reading from the N-terminus, the 137-residue chain is Peptide methionine sulfoxide reductase MsrB (137 aa).

Positions 7–129 (PGELKNGLSE…NSASLSFTDE (123 aa)) constitute a MsrB domain. Positions 46, 49, 95, and 98 each coordinate Zn(2+). Cys-118 serves as the catalytic Nucleophile.

It belongs to the MsrB Met sulfoxide reductase family. The cofactor is Zn(2+).

The catalysed reaction is L-methionyl-[protein] + [thioredoxin]-disulfide + H2O = L-methionyl-(R)-S-oxide-[protein] + [thioredoxin]-dithiol. The protein is Peptide methionine sulfoxide reductase MsrB of Klebsiella pneumoniae (strain 342).